We begin with the raw amino-acid sequence, 457 residues long: Argininosuccinate lyase (457 aa).

Belongs to the lyase 1 family. Argininosuccinate lyase subfamily.

The protein resides in the cytoplasm. The catalysed reaction is 2-(N(omega)-L-arginino)succinate = fumarate + L-arginine. It participates in amino-acid biosynthesis; L-arginine biosynthesis; L-arginine from L-ornithine and carbamoyl phosphate: step 3/3. The polypeptide is Argininosuccinate lyase (Klebsiella pneumoniae subsp. pneumoniae (strain ATCC 700721 / MGH 78578)).